The chain runs to 198 residues: FMN-dependent NADH:quinone oxidoreductase 6 (198 aa).

Position 96–99 (96–99 (MYNF)) interacts with FMN.

This sequence belongs to the azoreductase type 1 family. In terms of assembly, homodimer. FMN is required as a cofactor.

It catalyses the reaction 2 a quinone + NADH + H(+) = 2 a 1,4-benzosemiquinone + NAD(+). The catalysed reaction is N,N-dimethyl-1,4-phenylenediamine + anthranilate + 2 NAD(+) = 2-(4-dimethylaminophenyl)diazenylbenzoate + 2 NADH + 2 H(+). Its function is as follows. Quinone reductase that provides resistance to thiol-specific stress caused by electrophilic quinones. Functionally, also exhibits azoreductase activity. Catalyzes the reductive cleavage of the azo bond in aromatic azo compounds to the corresponding amines. The protein is FMN-dependent NADH:quinone oxidoreductase 6 of Burkholderia lata (strain ATCC 17760 / DSM 23089 / LMG 22485 / NCIMB 9086 / R18194 / 383).